Consider the following 628-residue polypeptide: MKNDHINYQQNLSQSPILNSNKNQTQQNQQQQQQQQQQNPQQQQQFQHQQVPQLSPQQIPFSEPLKNNLTLQHQQQQQQHQQLAGGQHGSLLRKSYSSRFHEKPQGELTKIANFQDVSPEERPSLFLLKLKQCCYVYDFSDNTYMVSKGVKQEALLQCVNFLSTNDQPLHESIYKMVFEMVAVNLFRPLPPRINPYGVMYDPEEDEPILEAAWPHIQVVYEVLLRFIDSPTFNTHIAKNYVDDRFVLQMLDLFDSEDPRERDYLKTTLHRIYGKFLGLRGFIRTAIRNLFCTFVYESHQHNGISEILEVLGSIINGFLVPLKDEHKQFLIKVLIPLHKPKSYSVYCSHLGYCMSQFIEKEPSLAEPIFKSILRLWPCGNSQKEVLFLSEMEDLLGLVSDEQFAKFRNQFFRQMTKCFQSEHFQVAERALYLFSNENIVLLIASKNNFTLALETFYKPLHENSISHWNRSIRNLSISSLKLFMEIDMDLFNKISEKYKESKKKQQQIQQREKFKQNAPETQKSKQINQNNNNNNNNINNNNNNNNNNNGSTETKADKPSMIRRKSLLPVDPSTIAALSSHRSLEDIMSTNSNSGNDDDDENNHTNHDSEIENEVKEDFRVPVNNRYTFT.

The segment covering 1–22 (MKNDHINYQQNLSQSPILNSNK) has biased composition (polar residues). 3 disordered regions span residues 1 to 61 (MKND…QIPF), 500 to 558 (KKKQ…DKPS), and 577 to 628 (SSHR…YTFT). 2 stretches are compositionally biased toward low complexity: residues 23 to 58 (NQTQ…SPQQ) and 524 to 547 (QINQ…NNNN). Positions 600 to 618 (NNHTNHDSEIENEVKEDFR) are enriched in basic and acidic residues.

The protein belongs to the phosphatase 2A regulatory subunit B56 family. In terms of assembly, PP2A consists of a trimeric holoenzyme, composed of a 37 kDa catalytic subunit (C subunit) and a 65 kDa constant regulatory subunit (A subunit), that associates with a variety of regulatory subunits (B subunit) such as phr2AB (B55) and psrA (B56 homolog). The trimer may partially dissociates into a core 'AC' dimer equally active compared to the trimer. Seems to play a role in proper anterior patterning (pstO and pstAB).

The protein resides in the cytoplasm. The protein localises to the cytosol. Functionally, involved in developmental cell fate decision. The sequence is that of Serine/threonine-protein phosphatase 2A regulatory subunit psrA (psrA) from Dictyostelium discoideum (Social amoeba).